Reading from the N-terminus, the 82-residue chain is UPF0213 protein MW0443 (82 aa).

A GIY-YIG domain is found at 2–77 (DSHFVYIVKC…KTYTRQKKLR (76 aa)).

The protein belongs to the UPF0213 family.

The chain is UPF0213 protein MW0443 from Staphylococcus aureus (strain MW2).